Reading from the N-terminus, the 337-residue chain is Holliday junction branch migration complex subunit RuvB (337 aa).

The large ATPase domain (RuvB-L) stretch occupies residues 4–186; that stretch reads ADRLIAADNP…FGIVQRLEYY (183 aa). Residues isoleucine 25, arginine 26, glycine 67, lysine 70, threonine 71, threonine 72, 133 to 135, arginine 176, tyrosine 186, and arginine 223 contribute to the ATP site; that span reads EDY. Position 71 (threonine 71) interacts with Mg(2+). Positions 187–257 are small ATPAse domain (RuvB-S); it reads KVDDLQYIVQ…IADKALNMLD (71 aa). The segment at 260–337 is head domain (RuvB-H); sequence VCGFDYMDRK…LHFGIDRPDK (78 aa). Positions 315 and 320 each coordinate DNA.

Belongs to the RuvB family. Homohexamer. Forms an RuvA(8)-RuvB(12)-Holliday junction (HJ) complex. HJ DNA is sandwiched between 2 RuvA tetramers; dsDNA enters through RuvA and exits via RuvB. An RuvB hexamer assembles on each DNA strand where it exits the tetramer. Each RuvB hexamer is contacted by two RuvA subunits (via domain III) on 2 adjacent RuvB subunits; this complex drives branch migration. In the full resolvosome a probable DNA-RuvA(4)-RuvB(12)-RuvC(2) complex forms which resolves the HJ.

Its subcellular location is the cytoplasm. It catalyses the reaction ATP + H2O = ADP + phosphate + H(+). In terms of biological role, the RuvA-RuvB-RuvC complex processes Holliday junction (HJ) DNA during genetic recombination and DNA repair, while the RuvA-RuvB complex plays an important role in the rescue of blocked DNA replication forks via replication fork reversal (RFR). RuvA specifically binds to HJ cruciform DNA, conferring on it an open structure. The RuvB hexamer acts as an ATP-dependent pump, pulling dsDNA into and through the RuvAB complex. RuvB forms 2 homohexamers on either side of HJ DNA bound by 1 or 2 RuvA tetramers; 4 subunits per hexamer contact DNA at a time. Coordinated motions by a converter formed by DNA-disengaged RuvB subunits stimulates ATP hydrolysis and nucleotide exchange. Immobilization of the converter enables RuvB to convert the ATP-contained energy into a lever motion, pulling 2 nucleotides of DNA out of the RuvA tetramer per ATP hydrolyzed, thus driving DNA branch migration. The RuvB motors rotate together with the DNA substrate, which together with the progressing nucleotide cycle form the mechanistic basis for DNA recombination by continuous HJ branch migration. Branch migration allows RuvC to scan DNA until it finds its consensus sequence, where it cleaves and resolves cruciform DNA. The chain is Holliday junction branch migration complex subunit RuvB from Aliivibrio salmonicida (strain LFI1238) (Vibrio salmonicida (strain LFI1238)).